The following is a 205-amino-acid chain: High frequency lysogenization protein HflD homolog (205 aa).

The protein belongs to the HflD family.

Its subcellular location is the cytoplasm. It is found in the cell inner membrane. This Shewanella sp. (strain ANA-3) protein is High frequency lysogenization protein HflD homolog.